Reading from the N-terminus, the 520-residue chain is Transactivator/viroplasmin protein (520 aa).

The tract at residues 486 to 520 (VQDASADSGPKDGPPPTRSIVEKEDVPTTSSKQVD) is disordered.

The protein belongs to the caulimoviridae viroplasmin family.

The protein localises to the host cytoplasm. In terms of biological role, enhances the ribosomal termination-reinitiation event leading to the translation of major open reading frames on the polycistronic viral RNAs. This chain is Transactivator/viroplasmin protein, found in Cauliflower mosaic virus (strain NY8153) (CaMV).